Reading from the N-terminus, the 285-residue chain is Bifunctional protein FolD (285 aa).

166-168 (GAS) serves as a coordination point for NADP(+).

This sequence belongs to the tetrahydrofolate dehydrogenase/cyclohydrolase family. In terms of assembly, homodimer.

The catalysed reaction is (6R)-5,10-methylene-5,6,7,8-tetrahydrofolate + NADP(+) = (6R)-5,10-methenyltetrahydrofolate + NADPH. The enzyme catalyses (6R)-5,10-methenyltetrahydrofolate + H2O = (6R)-10-formyltetrahydrofolate + H(+). It participates in one-carbon metabolism; tetrahydrofolate interconversion. Its function is as follows. Catalyzes the oxidation of 5,10-methylenetetrahydrofolate to 5,10-methenyltetrahydrofolate and then the hydrolysis of 5,10-methenyltetrahydrofolate to 10-formyltetrahydrofolate. This chain is Bifunctional protein FolD, found in Thioalkalivibrio sulfidiphilus (strain HL-EbGR7).